The sequence spans 819 residues: Regulator of G-protein signaling rgs-7 (819 aa).

Residues 1–11 (MSDEDADEYDD) show a composition bias toward acidic residues. Disordered stretches follow at residues 1 to 51 (MSDE…EMLW), 112 to 135 (GDDSSFRSRDRFVPPRRPRMGYGS), and 149 to 259 (SSTY…HNNE). Polar residues predominate over residues 32 to 44 (YQDTTESTGPSEA). Positions 112-124 (GDDSSFRSRDRFV) are enriched in basic and acidic residues. The segment covering 149–166 (SSTYSSSSEAHRLSSLRA) has biased composition (low complexity). The segment covering 173 to 185 (QLTSTTTSFQPLS) has biased composition (polar residues). Positions 213–223 (RMYRKNPKYRR) are enriched in basic residues. Basic and acidic residues predominate over residues 234–259 (SRLEESTSQESERAVTPESWMEHNNE). The region spanning 290–429 (KHKDIRGIIF…KASQVVGDPF (140 aa)) is the C2 domain. Disordered regions lie at residues 515-594 (YRST…DDNG) and 617-640 (FTFSPKHSSSKTNLRQLNGREEDK). Composition is skewed to polar residues over residues 517-533 (STGSSDMRGRSTNNLLD), 559-568 (PSITTTTSEN), and 617-632 (FTFSPKHSSSKTNLRQ). An RGS domain is found at 682–800 (SFESLLNNKF…LRDRLFLDLL (119 aa)).

In terms of assembly, interacts with egl-30.

Its function is as follows. Inhibits signal transduction by increasing the GTPase activity of G protein alpha subunit egl-30 (G-alpha(q)), thereby driving it into its inactive GDP-bound form. May organize egl-30 into a stable multiprotein signaling complex, and thereby persistently inhibit egl-30 when triggered by calcium or phospholipids. This is Regulator of G-protein signaling rgs-7 (rgs-7) from Caenorhabditis elegans.